Consider the following 403-residue polypeptide: Accessory Sec system protein translocase subunit SecY2 (403 aa).

10 consecutive transmembrane segments (helical) span residues 17 to 37 (MLYT…SIVS), 63 to 83 (LNIF…LMLI), 105 to 125 (ILTL…YVSK), 131 to 151 (DNIY…VWLA), 157 to 177 (YGIA…MMHQ), 186 to 206 (HIVI…LLFI), 240 to 260 (ITLM…HFIL), 276 to 296 (FDSP…GYFL), 339 to 359 (WFGL…TLFV), and 366 to 386 (IYFS…AETI).

This sequence belongs to the SecY/SEC61-alpha family. SecY2 subfamily. As to quaternary structure, may form heterotrimers with SecE and SecG subunits (Potential). Component of the accessory SecA2/SecY2 protein translocase complex required to export cell wall protein SrpA.

The protein localises to the cell membrane. Its function is as follows. The central subunit of a protein translocation channel (Potential). Part of the accessory SecA2/SecY2 system specifically required to export SraP, a serine-rich repeat cell wall protein encoded upstream in the same operon. The polypeptide is Accessory Sec system protein translocase subunit SecY2 (Staphylococcus aureus (strain NCTC 8325 / PS 47)).